A 354-amino-acid chain; its full sequence is MIKIYRMKFKKFVFKFIDHDKRNFTVVCVNVYANKATHEFAHDNDFSKKLEWKIKHFKHAHALERRIHQLVKETYFRESTGSLDQFADFKSVKVCVKDKIVKINLGENQEGNPVYKQVKSVSKHYHVFVRGTKPLNRREKGAYTHSMKVHDIHLTGNLDQGLEFAELCNFSIPESGIHSVQSQSSVTQSLNGQNVNPGAVVTGGDNWLSATNNANWNSTANTNAAWNSMNRNSVAQNSASKNANNWNSAANSAVKSSQNNNLSAMNNSLYNNNKAVNTNTINSTNNRNVSSQNNANRNASMATTYNNSVNSANSINTANTRSQTGGQDEEDFEKKYKKYKNKYAKLKNQKTSNF.

Over residues 309-326 (VNSANSINTANTRSQTGG) the composition is skewed to polar residues. The disordered stretch occupies residues 309–333 (VNSANSINTANTRSQTGGQDEEDFE). Residues 326–353 (GQDEEDFEKKYKKYKNKYAKLKNQKTSN) are a coiled coil.

It localises to the virion. This is an uncharacterized protein from Acanthamoeba polyphaga (Amoeba).